The sequence spans 329 residues: uncharacterized protein (329 aa).

Transmembrane regions (helical) follow at residues 13–35 (IPVL…WATI) and 229–248 (VIPA…SVVY).

Its subcellular location is the cell membrane. This is an uncharacterized protein from Archaeoglobus fulgidus (strain ATCC 49558 / DSM 4304 / JCM 9628 / NBRC 100126 / VC-16).